The chain runs to 453 residues: tRNA modification GTPase MnmE (453 aa).

The (6S)-5-formyl-5,6,7,8-tetrahydrofolate site is built by R22, E79, and K119. The TrmE-type G domain occupies 215 to 376; it reads GMKVVIAGRP…LKLHLKSLMG (162 aa). Position 225 (N225) interacts with K(+). GTP-binding positions include 225-230, 244-250, 269-272, and 334-337; these read NAGKSS, TEIAGTT, DTAG, and NKAD. Position 229 (S229) interacts with Mg(2+). 3 residues coordinate K(+): T244, I246, and T249. T250 contacts Mg(2+). K453 serves as a coordination point for (6S)-5-formyl-5,6,7,8-tetrahydrofolate.

It belongs to the TRAFAC class TrmE-Era-EngA-EngB-Septin-like GTPase superfamily. TrmE GTPase family. In terms of assembly, homodimer. Heterotetramer of two MnmE and two MnmG subunits. The cofactor is K(+).

It localises to the cytoplasm. In terms of biological role, exhibits a very high intrinsic GTPase hydrolysis rate. Involved in the addition of a carboxymethylaminomethyl (cmnm) group at the wobble position (U34) of certain tRNAs, forming tRNA-cmnm(5)s(2)U34. This chain is tRNA modification GTPase MnmE, found in Shewanella sp. (strain W3-18-1).